The sequence spans 362 residues: Protein RecA (362 aa).

An ATP-binding site is contributed by 77 to 84 (GPESSGKT).

Belongs to the RecA family.

Its subcellular location is the cytoplasm. In terms of biological role, can catalyze the hydrolysis of ATP in the presence of single-stranded DNA, the ATP-dependent uptake of single-stranded DNA by duplex DNA, and the ATP-dependent hybridization of homologous single-stranded DNAs. It interacts with LexA causing its activation and leading to its autocatalytic cleavage. The sequence is that of Protein RecA from Rhizobium etli (strain CIAT 652).